The sequence spans 579 residues: V-type ATP synthase alpha chain (579 aa).

ATP is bound at residue 227 to 234 (GGFGTGKT).

It belongs to the ATPase alpha/beta chains family.

The enzyme catalyses ATP + H2O + 4 H(+)(in) = ADP + phosphate + 5 H(+)(out). Functionally, produces ATP from ADP in the presence of a proton gradient across the membrane. The V-type alpha chain is a catalytic subunit. This chain is V-type ATP synthase alpha chain, found in Anaeromyxobacter sp. (strain K).